The following is a 73-amino-acid chain: Putative antimicrobial peptide clone 5 (73 aa).

The first 22 residues, 1–22 (MQIKHLITLFFLVLIGADQCSA), serve as a signal peptide directing secretion. A propeptide spanning residues 45-73 (EVSPQIDQYRNFQKREAELEELLDRLPMY) is cleaved from the precursor.

It belongs to the non-disulfide-bridged peptide (NDBP) superfamily. Short antimicrobial peptide (group 4) family. In terms of tissue distribution, expressed by the venom gland.

It is found in the secreted. Antibacterial peptide. This is Putative antimicrobial peptide clone 5 from Tityus costatus (Brazilian scorpion).